Here is a 361-residue protein sequence, read N- to C-terminus: Phospho-N-acetylmuramoyl-pentapeptide-transferase (361 aa).

10 consecutive transmembrane segments (helical) span residues S17–G37, G66–I86, T90–I110, L129–T149, I162–L182, G197–T217, V232–L252, I261–I281, L286–V306, and F340–I360.

Belongs to the glycosyltransferase 4 family. MraY subfamily. Mg(2+) is required as a cofactor.

The protein resides in the cell inner membrane. It catalyses the reaction UDP-N-acetyl-alpha-D-muramoyl-L-alanyl-gamma-D-glutamyl-meso-2,6-diaminopimeloyl-D-alanyl-D-alanine + di-trans,octa-cis-undecaprenyl phosphate = di-trans,octa-cis-undecaprenyl diphospho-N-acetyl-alpha-D-muramoyl-L-alanyl-D-glutamyl-meso-2,6-diaminopimeloyl-D-alanyl-D-alanine + UMP. It functions in the pathway cell wall biogenesis; peptidoglycan biosynthesis. Functionally, catalyzes the initial step of the lipid cycle reactions in the biosynthesis of the cell wall peptidoglycan: transfers peptidoglycan precursor phospho-MurNAc-pentapeptide from UDP-MurNAc-pentapeptide onto the lipid carrier undecaprenyl phosphate, yielding undecaprenyl-pyrophosphoryl-MurNAc-pentapeptide, known as lipid I. The sequence is that of Phospho-N-acetylmuramoyl-pentapeptide-transferase from Fusobacterium nucleatum subsp. nucleatum (strain ATCC 25586 / DSM 15643 / BCRC 10681 / CIP 101130 / JCM 8532 / KCTC 2640 / LMG 13131 / VPI 4355).